The sequence spans 396 residues: S-adenosylmethionine synthase (396 aa).

H16 serves as a coordination point for ATP. D18 serves as a coordination point for Mg(2+). E44 is a binding site for K(+). Residues E57 and Q100 each coordinate L-methionine. The segment at 100-110 (QSPDIAQGVDR) is flexible loop. Residues 167–169 (DAK), 233–234 (RF), D242, 248–249 (RK), A265, and K269 each bind ATP. D242 is an L-methionine binding site. Position 273 (K273) interacts with L-methionine.

This sequence belongs to the AdoMet synthase family. In terms of assembly, homotetramer; dimer of dimers. It depends on Mg(2+) as a cofactor. K(+) serves as cofactor.

The protein resides in the cytoplasm. It carries out the reaction L-methionine + ATP + H2O = S-adenosyl-L-methionine + phosphate + diphosphate. It functions in the pathway amino-acid biosynthesis; S-adenosyl-L-methionine biosynthesis; S-adenosyl-L-methionine from L-methionine: step 1/1. Its function is as follows. Catalyzes the formation of S-adenosylmethionine (AdoMet) from methionine and ATP. The overall synthetic reaction is composed of two sequential steps, AdoMet formation and the subsequent tripolyphosphate hydrolysis which occurs prior to release of AdoMet from the enzyme. The chain is S-adenosylmethionine synthase from Paraburkholderia phytofirmans (strain DSM 17436 / LMG 22146 / PsJN) (Burkholderia phytofirmans).